The sequence spans 434 residues: Histidinol dehydrogenase (434 aa).

Residues Y130, Q191, and N214 each contribute to the NAD(+) site. 3 residues coordinate substrate: S237, Q259, and H262. Q259 and H262 together coordinate Zn(2+). Catalysis depends on proton acceptor residues E327 and H328. Substrate contacts are provided by H328, D361, E415, and H420. Zn(2+) is bound at residue D361. Zn(2+) is bound at residue H420.

This sequence belongs to the histidinol dehydrogenase family. It depends on Zn(2+) as a cofactor.

It carries out the reaction L-histidinol + 2 NAD(+) + H2O = L-histidine + 2 NADH + 3 H(+). Its pathway is amino-acid biosynthesis; L-histidine biosynthesis; L-histidine from 5-phospho-alpha-D-ribose 1-diphosphate: step 9/9. Its function is as follows. Catalyzes the sequential NAD-dependent oxidations of L-histidinol to L-histidinaldehyde and then to L-histidine. This is Histidinol dehydrogenase from Rhizobium meliloti (strain 1021) (Ensifer meliloti).